The following is a 558-amino-acid chain: Alkaline/neutral invertase CINV2 (558 aa).

Ser-16, Ser-19, and Ser-50 each carry phosphoserine. Thr-79 carries the post-translational modification Phosphothreonine. Ser-555 carries the phosphoserine modification.

The protein belongs to the glycosyl hydrolase 100 family.

The protein resides in the cytoplasm. It localises to the cytosol. The enzyme catalyses Hydrolysis of terminal non-reducing beta-D-fructofuranoside residues in beta-D-fructofuranosides.. Its function is as follows. Cytosolic invertase that may cleave sucrose into glucose and fructose, and that is involved in the regulation of root growth. May regulate sugar-mediated root development by controlling sucrose catabolism in root cells. The sequence is that of Alkaline/neutral invertase CINV2 from Arabidopsis thaliana (Mouse-ear cress).